The primary structure comprises 195 residues: Imidazoleglycerol-phosphate dehydratase (195 aa).

The protein belongs to the imidazoleglycerol-phosphate dehydratase family.

It localises to the cytoplasm. It catalyses the reaction D-erythro-1-(imidazol-4-yl)glycerol 3-phosphate = 3-(imidazol-4-yl)-2-oxopropyl phosphate + H2O. It participates in amino-acid biosynthesis; L-histidine biosynthesis; L-histidine from 5-phospho-alpha-D-ribose 1-diphosphate: step 6/9. The sequence is that of Imidazoleglycerol-phosphate dehydratase from Thermotoga neapolitana (strain ATCC 49049 / DSM 4359 / NBRC 107923 / NS-E).